The following is a 497-amino-acid chain: Methionine--tRNA ligase (497 aa).

The short motif at 14 to 24 (YYVNDVPHLGH) is the 'HIGH' region element. Zn(2+) contacts are provided by Cys129, Cys132, Cys147, and His150. Residues 295 to 299 (KMSKT) carry the 'KMSKS' region motif. Lys298 contributes to the ATP binding site.

It belongs to the class-I aminoacyl-tRNA synthetase family. MetG type 2A subfamily. In terms of assembly, monomer. The cofactor is Zn(2+).

The protein localises to the cytoplasm. It carries out the reaction tRNA(Met) + L-methionine + ATP = L-methionyl-tRNA(Met) + AMP + diphosphate. Is required not only for elongation of protein synthesis but also for the initiation of all mRNA translation through initiator tRNA(fMet) aminoacylation. The protein is Methionine--tRNA ligase (metG) of Aquifex aeolicus (strain VF5).